Here is a 197-residue protein sequence, read N- to C-terminus: MSGSSRRLLWAATCLAVLCVSAAQPNITTLAPNVTEVPTTTTKVVPTTQMPTVLPETCASFNSCVSCVNATFTNNITCFWLHCQEANKTYCANEPLSNCSQVNRTDLCSVIPPTTPVPTNSTAKPTTRPSSPTPTPSVVTSAGTTNTTLTPTSQPERKSTFDAASFIGGIVLVLGVQAVIFFLYKFCKSKERNYHTL.

The N-terminal stretch at 1-23 (MSGSSRRLLWAATCLAVLCVSAA) is a signal peptide. The Extracellular portion of the chain corresponds to 24-162 (QPNITTLAPN…SQPERKSTFD (139 aa)). 9 N-linked (GlcNAc...) asparagine glycosylation sites follow: N26, N33, N69, N75, N87, N98, N103, N120, and N146. The disordered stretch occupies residues 116-156 (PVPTNSTAKPTTRPSSPTPTPSVVTSAGTTNTTLTPTSQPE). The segment covering 121–152 (STAKPTTRPSSPTPTPSVVTSAGTTNTTLTPT) has biased composition (low complexity). The helical transmembrane segment at 163–183 (AASFIGGIVLVLGVQAVIFFL) threads the bilayer. Residues 184-197 (YKFCKSKERNYHTL) lie on the Cytoplasmic side of the membrane. Residues 191–197 (ERNYHTL) form a required for endosomal and lysosomal localization region.

This sequence belongs to the CD164 family. As to quaternary structure, interacts with CXCR4. Post-translationally, highly N- and O-glycosylated; contains sialic acid. In terms of tissue distribution, expressed at high levels in the submaxillary gland and kidney, at moderate levels in the brain, heart, lung, liver, intestine, testis, muscle and bone marrow, and at low levels in the pancreas, spleen and thymus. In the ear, expressed in the inner and outer hair cells of the organ of Corti, cells of Kolliker's organ, cells in the lateral cochlear wall behind the spiral prominence and cells of the stria vascularis.

The protein localises to the lysosome membrane. The protein resides in the endosome membrane. Its subcellular location is the cell membrane. In terms of biological role, sialomucin that may play a key role in hematopoiesis. May be involved in cell adhesion. Promotes myogenesis by enhancing CXCR4-dependent cell motility. Positively regulates myoblast migration and promotes myoblast fusion into myotubes. This chain is Sialomucin core protein 24 (Cd164), found in Mus musculus (Mouse).